A 662-amino-acid polypeptide reads, in one-letter code: Bifunctional polymyxin resistance protein ArnA (662 aa).

Positions 1–307 are formyltransferase ArnAFT; sequence MTSKAVVFAY…ELGLVEGARL (307 aa). The Proton donor; for formyltransferase activity role is filled by His106. (6R)-10-formyltetrahydrofolate-binding positions include Arg116 and 138–142; that span reads IERAD. The segment at 316 to 662 is dehydrogenase ArnADH; sequence RRTRVLILGV…EALREREAQA (347 aa). NAD(+)-binding positions include Asp349 and 370 to 371; that span reads DI. UDP-alpha-D-glucuronate contacts are provided by residues Ala395, Tyr400, and 434 to 435; that span reads TS. The Proton acceptor; for decarboxylase activity role is filled by Glu436. Residues Arg462, Asn493, 527–536, and Tyr614 contribute to the UDP-alpha-D-glucuronate site; that span reads RLVDGGAQKR. Arg620 acts as the Proton donor; for decarboxylase activity in catalysis.

In the N-terminal section; belongs to the Fmt family. UDP-L-Ara4N formyltransferase subfamily. It in the C-terminal section; belongs to the NAD(P)-dependent epimerase/dehydratase family. UDP-glucuronic acid decarboxylase subfamily. Homohexamer, formed by a dimer of trimers.

It catalyses the reaction UDP-alpha-D-glucuronate + NAD(+) = UDP-beta-L-threo-pentopyranos-4-ulose + CO2 + NADH. The enzyme catalyses UDP-4-amino-4-deoxy-beta-L-arabinose + (6R)-10-formyltetrahydrofolate = UDP-4-deoxy-4-formamido-beta-L-arabinose + (6S)-5,6,7,8-tetrahydrofolate + H(+). It participates in nucleotide-sugar biosynthesis; UDP-4-deoxy-4-formamido-beta-L-arabinose biosynthesis; UDP-4-deoxy-4-formamido-beta-L-arabinose from UDP-alpha-D-glucuronate: step 1/3. It functions in the pathway nucleotide-sugar biosynthesis; UDP-4-deoxy-4-formamido-beta-L-arabinose biosynthesis; UDP-4-deoxy-4-formamido-beta-L-arabinose from UDP-alpha-D-glucuronate: step 3/3. The protein operates within bacterial outer membrane biogenesis; lipopolysaccharide biosynthesis. Its function is as follows. Bifunctional enzyme that catalyzes the oxidative decarboxylation of UDP-glucuronic acid (UDP-GlcUA) to UDP-4-keto-arabinose (UDP-Ara4O) and the addition of a formyl group to UDP-4-amino-4-deoxy-L-arabinose (UDP-L-Ara4N) to form UDP-L-4-formamido-arabinose (UDP-L-Ara4FN). The modified arabinose is attached to lipid A and is required for resistance to polymyxin and cationic antimicrobial peptides. This Pseudomonas aeruginosa (strain UCBPP-PA14) protein is Bifunctional polymyxin resistance protein ArnA.